The following is a 301-amino-acid chain: Multifunctional dioxygenase ausE (301 aa).

Residues Arg-72 and Gln-127 each contribute to the substrate site. His-130 and Asp-132 together coordinate Fe cation. Position 167 (Thr-167) interacts with substrate. His-214 contacts Fe cation. Arg-226 lines the substrate pocket.

This sequence belongs to the PhyH family. As to quaternary structure, homodimer. Fe cation is required as a cofactor.

The catalysed reaction is preaustinoid A1 + 2-oxoglutarate + O2 = preaustinoid A2 + succinate + CO2 + H2O. It catalyses the reaction preaustinoid A2 + 2-oxoglutarate + O2 = preaustinoid A3 + succinate + CO2 + H2O. The enzyme catalyses berkeleyone A + 2-oxoglutarate + O2 = preaustinoid A + succinate + CO2 + H2O. It functions in the pathway secondary metabolite biosynthesis; terpenoid biosynthesis. Its function is as follows. Multifunctional dioxygenase; part of the gene cluster A that mediates the biosynthesis of the fungal meroterpenoid acetoxydehydroaustin. The first step of the pathway is the synthesis of 3,5-dimethylorsellinic acid by the polyketide synthase ausA. 3,5-dimethylorsellinic acid is then prenylated by the polyprenyl transferase ausN. Further epoxidation by the FAD-dependent monooxygenase ausM and cyclization by the probable terpene cyclase ausL lead to the formation of protoaustinoid A. Protoaustinoid A is then oxidized to spiro-lactone preaustinoid A3 by the combined action of the FAD-binding monooxygenases ausB and ausC, and the dioxygenase ausE. Acid-catalyzed keto-rearrangement and ring contraction of the tetraketide portion of preaustinoid A3 by ausJ lead to the formation of preaustinoid A4. The aldo-keto reductase ausK, with the help of ausH, is involved in the next step by transforming preaustinoid A4 into isoaustinone which is in turn hydroxylated by the P450 monooxygenase ausI to form austinolide. The cytochrome P450 monooxygenase ausG then modifies austinolide to austinol. Austinol is further acetylated to austin by the O-acetyltransferase ausP, which spontaneously changes to dehydroaustin. The cytochrome P450 monooxygenase then converts dehydroaustin is into 7-dehydrodehydroaustin. The hydroxylation catalyzed by ausR permits the second O-acetyltransferase ausQ to add an additional acetyl group to the molecule, leading to the formation of acetoxydehydroaustin. Due to genetic rearrangements of the clusters and the subsequent loss of some enzymes, the end product of the Penicillium brasilianum austinoid biosynthesis clusters is acetoxydehydroaustin. This chain is Multifunctional dioxygenase ausE, found in Penicillium brasilianum.